We begin with the raw amino-acid sequence, 85 residues long: RNA-binding protein Hfq (85 aa).

Residues 9–68 (DPFLNALRRERIPVSIYLVNGIKLQGQVESFDQFVILLKNTVSQMVYKHAISTVVPARPV) enclose the Sm domain.

Belongs to the Hfq family. In terms of assembly, homohexamer.

Its function is as follows. RNA chaperone that binds small regulatory RNA (sRNAs) and mRNAs to facilitate mRNA translational regulation in response to envelope stress, environmental stress and changes in metabolite concentrations. Also binds with high specificity to tRNAs. The sequence is that of RNA-binding protein Hfq from Tolumonas auensis (strain DSM 9187 / NBRC 110442 / TA 4).